Here is a 552-residue protein sequence, read N- to C-terminus: Chaperonin GroEL (552 aa).

ATP contacts are provided by residues 30-33 (TLGP), K51, 87-91 (DGTTT), G415, 480-482 (NAA), and D496.

This sequence belongs to the chaperonin (HSP60) family. As to quaternary structure, forms a cylinder of 14 subunits composed of two heptameric rings stacked back-to-back. Interacts with the co-chaperonin GroES.

It localises to the cytoplasm. The enzyme catalyses ATP + H2O + a folded polypeptide = ADP + phosphate + an unfolded polypeptide.. Together with its co-chaperonin GroES, plays an essential role in assisting protein folding. The GroEL-GroES system forms a nano-cage that allows encapsulation of the non-native substrate proteins and provides a physical environment optimized to promote and accelerate protein folding. This is Chaperonin GroEL from Coxiella burnetii (strain RSA 493 / Nine Mile phase I).